The chain runs to 475 residues: Equilibrative nucleoside transporter 3 (475 aa).

The segment at Met1–Leu24 is disordered. At Met1–Thr53 the chain is on the cytoplasmic side. Over residues Ser12–Ser23 the composition is skewed to low complexity. Phosphoserine occurs at positions 21 and 23. Residues Leu31–Leu32 carry the Dileucine internalization motif motif. Residues Tyr54–Ala74 traverse the membrane as a helical segment. The Extracellular portion of the chain corresponds to Lys75–Ser105. Asn84 is a glycosylation site (N-linked (GlcNAc...) asparagine). Residues Tyr106–Val126 traverse the membrane as a helical segment. The Cytoplasmic portion of the chain corresponds to Asn127–Arg134. A helical transmembrane segment spans residues Val135–Val155. The Extracellular segment spans residues Asp156–Arg162. The helical transmembrane segment at Gly163–Ser183 threads the bilayer. The Cytoplasmic portion of the chain corresponds to Ser184–Gln199. A helical transmembrane segment spans residues Ala200–Leu220. Over Ala221–Ala230 the chain is Extracellular. Residues Leu231–Leu251 form a helical membrane-spanning segment. The Cytoplasmic segment spans residues Ser252–Thr305. The helical transmembrane segment at Ala306–Ile326 threads the bilayer. The Extracellular portion of the chain corresponds to Cys327 to Ser337. Residues Gly338–Ala358 form a helical membrane-spanning segment. The Cytoplasmic segment spans residues Asp359–Lys377. The helical transmembrane segment at Ala378–Tyr398 threads the bilayer. The Extracellular segment spans residues Gln399 to Pro415. The helical transmembrane segment at Ala416–Tyr436 threads the bilayer. Over Gly437–Ser454 the chain is Cytoplasmic. The chain crosses the membrane as a helical span at residues Phe455–Ile475.

It belongs to the SLC29A/ENT transporter (TC 2.A.57) family. In terms of tissue distribution, widely expressed in both adult and fetal tissues. Highest levels in placenta, uterus, ovary, spleen, lymph node and bone marrow. Expressed in liver. Lowest levels in brain and heart. Expressed in macrophages.

It localises to the lysosome membrane. It is found in the late endosome membrane. The protein localises to the mitochondrion membrane. Its subcellular location is the cell membrane. The catalysed reaction is adenosine(in) = adenosine(out). It carries out the reaction guanosine(in) = guanosine(out). It catalyses the reaction inosine(in) = inosine(out). The enzyme catalyses uridine(out) = uridine(in). The catalysed reaction is cytidine(in) = cytidine(out). It carries out the reaction thymidine(in) = thymidine(out). It catalyses the reaction 2'-deoxyadenosine(in) = 2'-deoxyadenosine(out). The enzyme catalyses 2'-deoxycytidine(in) = 2'-deoxycytidine(out). The catalysed reaction is guanine(out) = guanine(in). It carries out the reaction uracil(in) = uracil(out). It catalyses the reaction (R)-noradrenaline(out) = (R)-noradrenaline(in). The enzyme catalyses dopamine(out) = dopamine(in). The catalysed reaction is serotonin(out) = serotonin(in). It carries out the reaction tyramine(in) = tyramine(out). It catalyses the reaction ATP(in) = ATP(out). In terms of biological role, uniporter that mediates the facilitative transport of nucleoside across lysosomal and mitochondrial membranes. Functions as a non-electrogenic Na(+)-independent transporter. Substrate transport is pH-dependent and enhanced under acidic condition, probably reflecting the location of the transporter in acidic intracellular compartments. Proton is not a cotransporting ion but most likely change the ionization state of the transporter which dictates transport-permissible/impermissible conformation for nucleoside translocation. May direct the nucleoside transport from lysosomes to cytosol or cytosol to mitochondria to facilitate the fundamental function of salvage synthesis of nucleic acids. Involved in the transport of nucleosides (adenosine, guanosine, uridine, thymidine, cytidine and inosine) and deoxynucleosides (deoxyadenosine, deoxycytidine). Also mediates transport of purine nucleobases (adenine, guanine) and pyrimidine nucleobases (uracil). Also able to transport monoamine neurotransmitters dopamine, serotonin, noradrenaline and tyramine. Capable of transporting ATP. Mediates nucleoside export from lysosomes in macrophages, which regulates macrophage functions and numbers. This chain is Equilibrative nucleoside transporter 3, found in Homo sapiens (Human).